The sequence spans 534 residues: Acetyltransferase MATC1 (534 aa).

Catalysis depends on proton acceptor residues H186 and D459.

The protein belongs to the plant acyltransferase family.

It is found in the cell membrane. It functions in the pathway secondary metabolite biosynthesis. Acetyltransferase; part of the gene cluster that mediates the biosynthesis of mannosylerythritol lipids (MELs), surface-active substances that enhance the availability of water-insoluble substrates. Mannosylerythritol lipid production is responsible for hemolytic activity of Ustilago maydis. Depending on the number of acetyl groups, mannosylerythritol lipids can be differentiated into MEL A (fully acetylated), MEL B and MEL C (monoacetylated at R-6 and R-4, respectively), and the fully deacetylated MEL D. The first step in the pathway is the generation of mannosylerythritol by the glycosyltransferase EMT1 which catalyzes the transfer of GDP-mannose to the C-4 atom of meso-erythritol. This reaction has to be stereospecific, since only mannosyl-D-erythritol is generated. The produced disaccharide is subsequently acylated with fatty acids of various lengths derived from the peroxisomal beta-oxidation by the peroxisomal acyltransferases MAC1 and MAC2 at positions C-2 and C-3, repectively. The existence of MEL derivatives which carry an acetyl group at C-2 implies that at least MAC1 also accepts acetyl-CoA as a donor. The final step of MEL biosynthesis is the acetylation of the fully acylated mannosylerythritol lipids catalyzed by the acetyl-CoA-dependent acetyltransferase MAT1. MAT1 displays a relaxed regioselectivity and is able to transfer acetylgroups to both positions C-4 and C-6 of the mannosyl moiety. This is Acetyltransferase MATC1 from Mycosarcoma maydis (Corn smut fungus).